The primary structure comprises 119 residues: UPF0344 protein lp_1373 (119 aa).

The next 4 membrane-spanning stretches (helical) occupy residues 1 to 21 (MYLL…AIGL), 32 to 52 (FLIL…ALAI), 60 to 80 (WLTL…EVAF), and 92 to 112 (LVTL…GLHW).

This sequence belongs to the UPF0344 family.

It localises to the cell membrane. The polypeptide is UPF0344 protein lp_1373 (Lactiplantibacillus plantarum (strain ATCC BAA-793 / NCIMB 8826 / WCFS1) (Lactobacillus plantarum)).